The primary structure comprises 290 residues: UPF0750 membrane protein YpjC (290 aa).

The next 6 helical transmembrane spans lie at 9–29, 47–67, 75–95, 106–126, 146–166, and 179–199; these read NIFFILIGAAIFSFGLVHFNM, ALFHISPSISNLVLNIPIFFI, TMFVYTLVGTVALSLFLSIFQ, DLALAALFAGVFIGAGLGIIF, FGIPMGRTMFAFDACVIILSL, and LVAVFVAARLIDFIQEGGYAA.

It belongs to the UPF0750 family.

It is found in the cell membrane. This chain is UPF0750 membrane protein YpjC (ypjC), found in Bacillus subtilis (strain 168).